Here is a 142-residue protein sequence, read N- to C-terminus: ATP synthase epsilon chain (142 aa).

It belongs to the ATPase epsilon chain family. F-type ATPases have 2 components, CF(1) - the catalytic core - and CF(0) - the membrane proton channel. CF(1) has five subunits: alpha(3), beta(3), gamma(1), delta(1), epsilon(1). CF(0) has three main subunits: a, b and c.

It is found in the cell inner membrane. Functionally, produces ATP from ADP in the presence of a proton gradient across the membrane. The protein is ATP synthase epsilon chain of Histophilus somni (strain 129Pt) (Haemophilus somnus).